A 301-amino-acid chain; its full sequence is GTPase Era (301 aa).

One can recognise an Era-type G domain in the interval 7-175 (YCGFIAIVGR…AGIVRKHLPE (169 aa)). Residues 15 to 22 (GRPNVGKS) form a G1 region. Residue 15-22 (GRPNVGKS) coordinates GTP. The G2 stretch occupies residues 41–45 (QTTRH). Residues 62-65 (DTPG) form a G3 region. Residues 62–66 (DTPGL) and 124–127 (NKVD) contribute to the GTP site. The interval 124 to 127 (NKVD) is G4. A G5 region spans residues 154-156 (ISA). Residues 206-283 (LGAELPYSVT…HLELWVKVKS (78 aa)) enclose the KH type-2 domain.

The protein belongs to the TRAFAC class TrmE-Era-EngA-EngB-Septin-like GTPase superfamily. Era GTPase family. As to quaternary structure, monomer.

The protein localises to the cytoplasm. It is found in the cell inner membrane. Functionally, an essential GTPase that binds both GDP and GTP, with rapid nucleotide exchange. Plays a role in 16S rRNA processing and 30S ribosomal subunit biogenesis and possibly also in cell cycle regulation and energy metabolism. The chain is GTPase Era from Salmonella agona (strain SL483).